Consider the following 129-residue polypeptide: Follitropin subunit beta (129 aa).

An N-terminal signal peptide occupies residues 1–20 (MKTVQFCFLFCCWKAICCNS). Disulfide bonds link Cys-21–Cys-69, Cys-35–Cys-84, Cys-38–Cys-122, Cys-46–Cys-100, Cys-50–Cys-102, and Cys-105–Cys-112. Residues Asn-25 and Asn-42 are each glycosylated (N-linked (GlcNAc...) asparagine).

This sequence belongs to the glycoprotein hormones subunit beta family. As to quaternary structure, heterodimer. The active follitropin is a heterodimer composed of an alpha chain/CGA shared with other hormones and a unique beta chain/FSHB shown here.

It localises to the secreted. In terms of biological role, together with the alpha chain CGA constitutes follitropin, the follicle-stimulating hormone, and provides its biological specificity to the hormone heterodimer. Binds FSHR, a G protein-coupled receptor, on target cells to activate downstream signaling pathways. Follitropin is involved in follicle development and spermatogenesis in reproductive organs. The protein is Follitropin subunit beta (FSHB) of Aotus nancymaae (Ma's night monkey).